A 183-amino-acid polypeptide reads, in one-letter code: SAYSvFN domain-containing protein 1 (183 aa).

Residues Met1–Lys105 lie on the Cytoplasmic side of the membrane. The tract at residues Ala11–Glu36 is disordered. Low complexity predominate over residues Gly16 to Glu36. The middle helical (MH) stretch occupies residues Ser91–Lys105. Residues Val106–Phe126 constitute an intramembrane region (helical). Residues Val127–Arg183 are Cytoplasmic-facing.

The protein belongs to the SAYSD1 family. Associates (via N-terminus) with ribosomes.

Its subcellular location is the endoplasmic reticulum membrane. It is found in the cytoplasmic vesicle membrane. Its function is as follows. Ufmylation 'reader' component of a translocation-associated quality control pathway, a mechanism that takes place when a ribosome has stalled during translation, and which is required to degrade clogged substrates. Specifically recognizes and binds ufmylated ribosomes when a ribosome has stalled, promoting the transport of stalled nascent chain via the TRAPP complex to lysosomes for degradation. The protein is SAYSvFN domain-containing protein 1 of Homo sapiens (Human).